A 502-amino-acid polypeptide reads, in one-letter code: Acetylcholine receptor subunit alpha-type unc-63 (502 aa).

Positions 1 to 23 (MGPNDHGFAYILIFLLLSPPTHA) are cleaved as a signal peptide. At 24–263 (NRDANRLFED…HLRRKTLFYT (240 aa)) the chain is on the extracellular side. N-linked (GlcNAc...) asparagine glycosylation occurs at Asn-136. A disulfide bond links Cys-151 and Cys-165. 3 consecutive transmembrane segments (helical) span residues 264 to 284 (VNLI…FYLP), 293 to 313 (LCIS…EIIP), and 326 to 346 (LLFT…TLNV). Residues 347–470 (HYRSPTTHTM…WKYISVVMDR (124 aa)) lie on the Cytoplasmic side of the membrane. A helical membrane pass occupies residues 471–491 (IFLITFTFACAFGTVVIIARA).

Belongs to the ligand-gated ion channel (TC 1.A.9) family. Acetylcholine receptor (TC 1.A.9.1) subfamily. In terms of assembly, component of nicotinic acetylcholine receptor. In muscles, composed of 2 non-alpha subunits lev-1 and unc-29, and 3 alpha subunits unc-38, unc-63 and lev-8. In cholinergic motoneurons, composed of 2 non-alpha subunits acr-2 and acr-3, and 3 alpha subunits unc-38, unc-63 and acr-12. Interacts with lev-10. In terms of tissue distribution, expressed in body wall muscles, in vulval muscles and in neurons.

The protein localises to the postsynaptic cell membrane. The protein resides in the cell membrane. Its function is as follows. Alpha subunit of nicotinic acetylcholine receptor (nAChR). Probably acts in cholinergic motoneurons to regulate presynaptic neurotransmitter release, thereby ensuring normal level of excitation of cholinergic motoneurons during locomotion. Involved in nAChR sensitivity to nicotine and levamisole. The polypeptide is Acetylcholine receptor subunit alpha-type unc-63 (unc-63) (Caenorhabditis elegans).